We begin with the raw amino-acid sequence, 276 residues long: Eukaryotic translation initiation factor 3 subunit G-2 (276 aa).

Residues 196–274 (SAVRISNLSE…LILCVEWSKP (79 aa)) form the RRM domain.

The protein belongs to the eIF-3 subunit G family. Component of the eukaryotic translation initiation factor 3 (eIF-3) complex. The eIF-3 complex interacts with pix.

The protein resides in the cytoplasm. In terms of biological role, RNA-binding component of the eukaryotic translation initiation factor 3 (eIF-3) complex, which is involved in protein synthesis of a specialized repertoire of mRNAs and, together with other initiation factors, stimulates binding of mRNA and methionyl-tRNAi to the 40S ribosome. The eIF-3 complex specifically targets and initiates translation of a subset of mRNAs involved in cell proliferation. This subunit can bind 18S rRNA. This is Eukaryotic translation initiation factor 3 subunit G-2 from Drosophila persimilis (Fruit fly).